We begin with the raw amino-acid sequence, 373 residues long: DNA replication and repair protein RecF (373 aa).

30 to 37 (GANGSGKT) serves as a coordination point for ATP.

The protein belongs to the RecF family.

It is found in the cytoplasm. The RecF protein is involved in DNA metabolism; it is required for DNA replication and normal SOS inducibility. RecF binds preferentially to single-stranded, linear DNA. It also seems to bind ATP. The chain is DNA replication and repair protein RecF from Marinobacter nauticus (strain ATCC 700491 / DSM 11845 / VT8) (Marinobacter aquaeolei).